The following is a 239-amino-acid chain: Sugar fermentation stimulation protein homolog (239 aa).

It belongs to the SfsA family.

This chain is Sugar fermentation stimulation protein homolog, found in Caulobacter vibrioides (strain ATCC 19089 / CIP 103742 / CB 15) (Caulobacter crescentus).